A 438-amino-acid polypeptide reads, in one-letter code: uncharacterized protein (438 aa).

Positions 23–193 (IHAKPPVVVV…VNATIRLTAA (171 aa)) constitute an FAD-binding PCMH-type domain. FAD is bound by residues 55–59 (VRGSG), 60–61 (HS), glutamine 65, aspartate 117, threonine 122, 128–132 (SVGGF), isoleucine 183, tyrosine 393, and 430–433 (APGY). Histidine 60 is modified (pros-8alpha-FAD histidine).

Belongs to the oxygen-dependent FAD-linked oxidoreductase family. FAD is required as a cofactor.

The FAS-operon encodes genes involved in cytokinin production and in host plant fasciation (leafy gall). This is an uncharacterized protein from Rhodococcoides fascians (Rhodococcus fascians).